A 743-amino-acid chain; its full sequence is Envelope glycoprotein H (743 aa).

An N-terminal signal peptide occupies residues 1–23 (MRPGLPPYLTVFTVYLLSHLPSQ). Residues 24–720 (RYGADAASEA…VVDATDSRLL (697 aa)) lie on the Virion surface side of the membrane. N56, N63, N68, and N193 each carry an N-linked (GlcNAc...) asparagine; by host glycan. Residues 218–281 (YLMDELRYVK…QTEKHELLVL (64 aa)) form an interaction with gL region. 2 N-linked (GlcNAc...) asparagine; by host glycosylation sites follow: N642 and N701. Residues 721–741 (MMSVYALSAIIGIYLLYRMLK) traverse the membrane as a helical segment. At 742-743 (TC) the chain is on the intravirion side.

Belongs to the herpesviridae glycoprotein H family. In terms of assembly, interacts with glycoprotein L (gL); this interaction is necessary for the correct processing and cell surface expression of gH. The heterodimer gH/gL seems to interact with gB trimers during fusion. Forms the envelope pentamer complex (PC) composed of gH, gL, UL128, UL130, and UL131A. The pentamer interacts with host NRP2. Forms the envelope trimer complex composed of gH, gL, and gO. The trimer interacts with host PDGFRA. The trimer also interacts with host EPHA2. Interacts with UL116. In terms of processing, N-glycosylated, O-glycosylated, and sialylated.

It localises to the virion membrane. The protein localises to the host cell membrane. The protein resides in the host endosome membrane. Functionally, the heterodimer glycoprotein H-glycoprotein L is required for the fusion of viral and plasma membranes leading to virus entry into the host cell. Following initial binding to host receptor, membrane fusion is mediated by the fusion machinery composed of gB and the heterodimer gH/gL. May also be involved in the fusion between the virion envelope and the outer nuclear membrane during virion morphogenesis. In human cytomegalovirus, forms two distincts complexes to mediate viral entry, a trimer and a pentamer at the surface of the virion envelope. The gH-gL-gO trimer is required for infection in fibroblasts by interacting with host PDGFRA, and in glioblastoma cells by interacting with host EPHA2. The gH-gL-UL128-UL130-UL131A pentamer is essential for viral entry in epithelial, endothelial and myeloid cells via interaction with host NRP2. This is Envelope glycoprotein H from Human cytomegalovirus (strain AD169) (HHV-5).